We begin with the raw amino-acid sequence, 418 residues long: UDP-N-acetylglucosamine 1-carboxyvinyltransferase (418 aa).

Phosphoenolpyruvate is bound at residue 22-23 (KN). Arg-92 is a UDP-N-acetyl-alpha-D-glucosamine binding site. Cys-116 acts as the Proton donor in catalysis. At Cys-116 the chain carries 2-(S-cysteinyl)pyruvic acid O-phosphothioketal. UDP-N-acetyl-alpha-D-glucosamine-binding positions include 121–125 (RPIDL), Asp-305, and Leu-327.

It belongs to the EPSP synthase family. MurA subfamily.

Its subcellular location is the cytoplasm. It carries out the reaction phosphoenolpyruvate + UDP-N-acetyl-alpha-D-glucosamine = UDP-N-acetyl-3-O-(1-carboxyvinyl)-alpha-D-glucosamine + phosphate. Its pathway is cell wall biogenesis; peptidoglycan biosynthesis. Cell wall formation. Adds enolpyruvyl to UDP-N-acetylglucosamine. This chain is UDP-N-acetylglucosamine 1-carboxyvinyltransferase, found in Campylobacter lari (strain RM2100 / D67 / ATCC BAA-1060).